A 436-amino-acid polypeptide reads, in one-letter code: GTPase Der (436 aa).

2 consecutive EngA-type G domains span residues 4–167 (PTIA…PNEY) and 175–351 (IKFS…ESQN). GTP is bound by residues 10 to 17 (GRPNVGKS), 57 to 61 (DTGGI), 119 to 122 (NKVD), 181 to 188 (GRPNVGKS), 229 to 233 (DTAGM), and 294 to 297 (NKWD). The KH-like domain maps to 352–436 (TRIPSAVLND…PIHLIARKRK (85 aa)).

The protein belongs to the TRAFAC class TrmE-Era-EngA-EngB-Septin-like GTPase superfamily. EngA (Der) GTPase family. As to quaternary structure, associates with the 50S ribosomal subunit.

GTPase that plays an essential role in the late steps of ribosome biogenesis. The protein is GTPase Der of Streptococcus pneumoniae (strain JJA).